A 1040-amino-acid chain; its full sequence is Contactin-2 (1040 aa).

The first 30 residues, 1–30 (MGTHARKKASLLLLVLATVALVSSPGWSFA), serve as a signal peptide directing secretion. 6 Ig-like C2-type domains span residues 39 to 130 (PIFE…AVLR), 135 to 224 (QEFS…SVFS), 241 to 324 (PSIK…GRII), 329 to 413 (PEWL…AELA), 419 to 506 (PDFR…GILS), and 511 to 605 (TKIT…ATVL). 4 disulfide bridges follow: C63-C113, C157-C209, C263-C308, and C350-C397. N-linked (GlcNAc...) asparagine glycosylation is found at N78, N200, and N206. 4 N-linked (GlcNAc...) asparagine glycosylation sites follow: N463, N479, N500, and N527. Fibronectin type-III domains lie at 612–710 (PPGG…TKEA), 715–812 (APSG…SAEE), 817–913 (APAK…VKPP), and 917–1008 (PPGN…NGGT). N777 is a glycosylation site (N-linked (GlcNAc...) asparagine). The Cell attachment site signature appears at 796–798 (RGD). N-linked (GlcNAc...) asparagine glycosylation is found at N832, N920, and N942. The segment at 895 to 921 (RAGTGPASPSADAMTVKPPPRRPPGNI) is disordered. The GPI-anchor amidated alanine moiety is linked to residue A1015. Residues 1016 to 1040 (AARPAHPGPAFSCMVILMLAGYQKL) constitute a propeptide, removed in mature form.

The protein belongs to the immunoglobulin superfamily. Contactin family. In neural tissues in embryos, and in adult brain, spinal cord and cerebellum.

Its subcellular location is the cell membrane. Its function is as follows. May play a role in the initial growth and guidance of axons. May be involved in cell adhesion. In conjunction with another transmembrane protein, CNTNAP2, contributes to the organization of axonal domains at nodes of Ranvier by maintaining voltage-gated potassium channels at the juxtaparanodal region. The chain is Contactin-2 (Cntn2) from Rattus norvegicus (Rat).